We begin with the raw amino-acid sequence, 292 residues long: uncharacterized protein (292 aa).

A signal peptide spans 1-21 (MNSNSNKKRDPARFPAGVAQG). The interval 1–30 (MNSNSNKKRDPARFPAGVAQGCSTTRAGDL) is disordered.

This is an uncharacterized protein from Treponema pallidum (strain Nichols).